Here is a 240-residue protein sequence, read N- to C-terminus: tRNA (guanine-N(1)-)-methyltransferase (240 aa).

Residues Gly-110 and 129-134 (LGDFVL) each bind S-adenosyl-L-methionine.

This sequence belongs to the RNA methyltransferase TrmD family. As to quaternary structure, homodimer.

Its subcellular location is the cytoplasm. It carries out the reaction guanosine(37) in tRNA + S-adenosyl-L-methionine = N(1)-methylguanosine(37) in tRNA + S-adenosyl-L-homocysteine + H(+). Its function is as follows. Specifically methylates guanosine-37 in various tRNAs. The sequence is that of tRNA (guanine-N(1)-)-methyltransferase from Clostridium botulinum (strain Langeland / NCTC 10281 / Type F).